The primary structure comprises 631 residues: Phosphomethylpyrimidine synthase (631 aa).

Substrate is bound by residues Asn239, Met268, Tyr297, His333, 353 to 355 (SRG), 394 to 397 (DGLR), and Glu433. His437 lines the Zn(2+) pocket. Tyr460 is a substrate binding site. His501 serves as a coordination point for Zn(2+). The [4Fe-4S] cluster site is built by Cys581, Cys584, and Cys589.

It belongs to the ThiC family. As to quaternary structure, homodimer. Requires [4Fe-4S] cluster as cofactor.

It carries out the reaction 5-amino-1-(5-phospho-beta-D-ribosyl)imidazole + S-adenosyl-L-methionine = 4-amino-2-methyl-5-(phosphooxymethyl)pyrimidine + CO + 5'-deoxyadenosine + formate + L-methionine + 3 H(+). It functions in the pathway cofactor biosynthesis; thiamine diphosphate biosynthesis. In terms of biological role, catalyzes the synthesis of the hydroxymethylpyrimidine phosphate (HMP-P) moiety of thiamine from aminoimidazole ribotide (AIR) in a radical S-adenosyl-L-methionine (SAM)-dependent reaction. The sequence is that of Phosphomethylpyrimidine synthase from Escherichia coli O157:H7.